Consider the following 58-residue polypeptide: LKCYGIFRKIMTCPQGQNICEKFAYSPMHNGWMYSWGCTSNCHKGPLDKCCSTDLCNY.

Disulfide bonds link cysteine 3-cysteine 20, cysteine 13-cysteine 38, cysteine 42-cysteine 50, and cysteine 51-cysteine 56.

It belongs to the three-finger toxin family. Short-chain subfamily. As to expression, expressed by the venom gland.

The protein localises to the secreted. Functionally, produces peripheral paralysis by blocking neuromuscular transmission at the postsynaptic site. Binds to and inhibits the endogenous nicotinic acetylcholine receptors (nAChR) in the human rhabdomyosarcoma TE 671 cell line with an IC(50) of 266 mM. Not toxic to mice by intraperitoneal injection or to zebrafish by injection at the back dorsolateral region. The chain is Short neurotoxin MS11 from Micrurus surinamensis (Surinam coral snake).